The sequence spans 1230 residues: MASSHFGPASPASSTPPPSSAYARLIAPTITRNSSSSSSRSTTTCSSTSSVQAVPMRPPPIETSTAATSRSQLPSNRHSENEAEHDTSYTSPGLSVGGRGGLARNGPRSNRLGTSPQARHVPPSIVALSPSPSPILNMASKRQSNTETVSGTSPSTPLGKSFLAQQDLSPNSSTIPLRVTISVDPNDRLSHDRESHSAERPRSSGNSPVRGRHGHLSTPSSPTNSYRALGGKPRTLSVDAGQNWGGSHRSRARDGDDRERRQSQVSSASSGALKKHSLDDWVLGEELGVGSYSTVYCVTPSANTHSPTSPQPARKYALKVINQAHLIQEKKVKYAMVERDALIRLSDPRPSKGHKRGVSSSSSSGYAQTGSAGKRRSTASIGGQSSMASVSGGTVSNSKKDTRDRLSIVTTSSAASSPVLTASSGSTQLSPTAVSGGGGNIKGRRPSRSAEPPTPVQEQTEMLIRGGEDGKDGQDGQETPSREWDRDRDWDNMTRSRPPSPVREESAEGGEKEKDEEERSGAEPVELGAAIHLTLPPPQIPSTPEPRGSPLLSTDGHRTSRETPRDRPHLTPKRRRQSLAPSERSVKSASTTGKMSAAAHPGVVRLYSTFNDSSSLYFVLSLASNGELASIIRKHGSLDITSARYYAAQLIDTLEFVHSRGVIHRDLKPENILLDEDMRIKITDFGSAKIIAKDEPIVDDSSRSRSFVGSADFVSPEVLRNEVATTASDIWAFGCVLYQFICGKPPFRGATDYLTFQKILKREVEFPKGIDEDAKSLIDTILDLEPNLRPSITFIKTHPFFQSIDFSTLWTIPAPPISSGLREPSKSTTLAQLEASDIWGVFEGSDVGEEDEDGFEYDADTVSPRPEGGAVGEGMMEPLFDRRAAASAVHNVDHPKFSRLRNQYINLGEDLDPPRPAYAGAGTGGRGKREKEVEKKKGEKARGLSHGSESSGGNRSALAGWLEAIKFGGAGGGGMSGSATSVAASDTVRTPGTGTGTGPGSRPGSRAGIPSFGLGPGSGSRSNRGSGASMRSDEARDLSMSLGGLRMNMSKASEFDKWTPLLLANESIIFTSPITLRTSSPALQLHLPAFLLPAPKKRQLVLTDFPRLLMIKDDNEADGDPAGSDSGAGLSSSSHVESGGGGVGGGGRGGGHGSLRIKGEAVFVPRPSTATGSSTTKGGGYSAVPNAVMDVQEKGSKGFTVQTPGMVYYCHVDSVELRAKWMAAIHRVGL.

Residues 1–277 (MASSHFGPAS…ASSGALKKHS (277 aa)) form a disordered region. Residues 34-50 (SSSSSSRSTTTCSSTSS) show a composition bias toward low complexity. Over residues 62–76 (ETSTAATSRSQLPSN) the composition is skewed to polar residues. A compositionally biased stretch (basic and acidic residues) spans 77 to 87 (RHSENEAEHDT). 2 stretches are compositionally biased toward polar residues: residues 107–117 (PRSNRLGTSPQ) and 140–175 (SKRQ…SSTI). The span at 185 to 202 (PNDRLSHDRESHSAERPR) shows a compositional bias: basic and acidic residues. A compositionally biased stretch (polar residues) spans 217 to 226 (STPSSPTNSY). The segment covering 252 to 262 (ARDGDDRERRQ) has biased composition (basic and acidic residues). The Protein kinase domain occupies 281–801 (WVLGEELGVG…ITFIKTHPFF (521 aa)). ATP-binding positions include 291 to 293 (SYS) and Lys-319. Disordered stretches follow at residues 345-522 (LSDP…RSGA) and 534-597 (TLPP…KMSA). Composition is skewed to polar residues over residues 378-397 (TASI…TVSN) and 408-433 (IVTT…SPTA). Composition is skewed to basic and acidic residues over residues 466-494 (GGED…DNMT) and 502-521 (VREE…ERSG). Positions 535 to 544 (LPPPQIPSTP) are enriched in pro residues. A compositionally biased stretch (basic and acidic residues) spans 555 to 569 (DGHRTSRETPRDRPH). ATP contacts are provided by residues 621–623 (SLA) and Glu-627. The active-site Proton acceptor is Asp-666. Glu-670 and Asp-684 together coordinate ATP. The segment covering 850–859 (EDEDGFEYDA) has biased composition (acidic residues). 4 disordered regions span residues 850–871 (EDED…GGAV), 907–955 (LGED…GGNR), 972–1035 (GGGM…SDEA), and 1116–1152 (EADG…GGGH). The segment covering 927 to 942 (GKREKEVEKKKGEKAR) has biased composition (basic and acidic residues). Composition is skewed to low complexity over residues 977–992 (GSAT…RTPG), 1002–1030 (RPGS…GASM), and 1120–1137 (DPAG…SHVE). Gly residues predominate over residues 1138 to 1152 (SGGGGVGGGGRGGGH).

It belongs to the protein kinase superfamily. AGC Ser/Thr protein kinase family. PDPK1 subfamily.

It carries out the reaction L-seryl-[protein] + ATP = O-phospho-L-seryl-[protein] + ADP + H(+). It catalyses the reaction L-threonyl-[protein] + ATP = O-phospho-L-threonyl-[protein] + ADP + H(+). Functionally, serine/threonine-protein kinase that functions in the sphingolipid-mediated signaling pathway, regulating organization of the plasma membrane. May phosphorylate PKC1 to activate the cell integrity MAPK cascade during cell wall and membrane stress. May regulate sphingolipid metabolism upstream of YPK1. This chain is Serine/threonine-protein kinase PDK1, found in Cryptococcus neoformans var. grubii serotype A (strain H99 / ATCC 208821 / CBS 10515 / FGSC 9487) (Filobasidiella neoformans var. grubii).